Consider the following 151-residue polypeptide: Putative pre-16S rRNA nuclease (151 aa).

Belongs to the YqgF nuclease family.

It localises to the cytoplasm. Its function is as follows. Could be a nuclease involved in processing of the 5'-end of pre-16S rRNA. This is Putative pre-16S rRNA nuclease from Bifidobacterium adolescentis (strain ATCC 15703 / DSM 20083 / NCTC 11814 / E194a).